The sequence spans 425 residues: Serine--tRNA ligase (425 aa).

Residue 229–231 participates in L-serine binding; the sequence is TSE. Residues 259-261 and valine 275 each bind ATP; that span reads RKE. L-serine is bound at residue glutamate 282. Position 349-352 (349-352) interacts with ATP; the sequence is EVTS. Threonine 384 serves as a coordination point for L-serine.

Belongs to the class-II aminoacyl-tRNA synthetase family. Type-1 seryl-tRNA synthetase subfamily. In terms of assembly, homodimer. The tRNA molecule binds across the dimer.

It localises to the cytoplasm. It catalyses the reaction tRNA(Ser) + L-serine + ATP = L-seryl-tRNA(Ser) + AMP + diphosphate + H(+). The enzyme catalyses tRNA(Sec) + L-serine + ATP = L-seryl-tRNA(Sec) + AMP + diphosphate + H(+). The protein operates within aminoacyl-tRNA biosynthesis; selenocysteinyl-tRNA(Sec) biosynthesis; L-seryl-tRNA(Sec) from L-serine and tRNA(Sec): step 1/1. In terms of biological role, catalyzes the attachment of serine to tRNA(Ser). Is also able to aminoacylate tRNA(Sec) with serine, to form the misacylated tRNA L-seryl-tRNA(Sec), which will be further converted into selenocysteinyl-tRNA(Sec). The polypeptide is Serine--tRNA ligase (Borreliella burgdorferi (strain ATCC 35210 / DSM 4680 / CIP 102532 / B31) (Borrelia burgdorferi)).